A 541-amino-acid chain; its full sequence is Membrane protein insertase YidC (541 aa).

The helical transmembrane segment at 6 to 26 (SLLVLALIFISFLVYQQWQLD) threads the bilayer. The interval 34 to 56 (EQTTSITATSDVPASSPSNSQAI) is disordered. A run of 4 helical transmembrane segments spans residues 337 to 357 (FWLL…IICV), 416 to 436 (LGGC…YWTF), 454 to 474 (LSAQ…MFLL), and 495 to 515 (PLVF…YWLV).

Belongs to the OXA1/ALB3/YidC family. Type 1 subfamily. As to quaternary structure, interacts with the Sec translocase complex via SecD. Specifically interacts with transmembrane segments of nascent integral membrane proteins during membrane integration.

The protein resides in the cell inner membrane. In terms of biological role, required for the insertion and/or proper folding and/or complex formation of integral membrane proteins into the membrane. Involved in integration of membrane proteins that insert both dependently and independently of the Sec translocase complex, as well as at least some lipoproteins. Aids folding of multispanning membrane proteins. The sequence is that of Membrane protein insertase YidC from Haemophilus influenzae (strain ATCC 51907 / DSM 11121 / KW20 / Rd).